The primary structure comprises 171 residues: S-ribosylhomocysteine lyase (171 aa).

Residues histidine 54, histidine 58, and cysteine 128 each coordinate Fe cation.

It belongs to the LuxS family. In terms of assembly, homodimer. Requires Fe cation as cofactor.

The catalysed reaction is S-(5-deoxy-D-ribos-5-yl)-L-homocysteine = (S)-4,5-dihydroxypentane-2,3-dione + L-homocysteine. Involved in the synthesis of autoinducer 2 (AI-2) which is secreted by bacteria and is used to communicate both the cell density and the metabolic potential of the environment. The regulation of gene expression in response to changes in cell density is called quorum sensing. Catalyzes the transformation of S-ribosylhomocysteine (RHC) to homocysteine (HC) and 4,5-dihydroxy-2,3-pentadione (DPD). This Escherichia coli O157:H7 protein is S-ribosylhomocysteine lyase.